The chain runs to 167 residues: MSNLTYLQGYPEQLLSQVRTLINEQRLGDVLAKRYPGTHDYATDKALWQYTQDLKNQFLRNAPPINKVMYDNKIHVLKNALGLHTAVSRVQGGKLKAKVEIRVATVFRNAPEPFLRMIVVHELAHLKEKEHNKAFYQLCCHMEPQYHQLEFDTRLWLTQLSLGQNKI.

The enzyme catalyses UTP + H2O = UMP + diphosphate + H(+). Specifically catalyzes the hydrolysis of UTP to UMP and diphosphate in vitro, albeit at apparently slow rate. Shows no activity towards ATP, GTP, CTP, dTTP and ITP as substrates. In Escherichia coli (strain K12), this protein is UTP pyrophosphatase.